The sequence spans 227 residues: Probable septum site-determining protein MinC (227 aa).

It belongs to the MinC family. Interacts with MinD and FtsZ.

In terms of biological role, cell division inhibitor that blocks the formation of polar Z ring septums. Rapidly oscillates between the poles of the cell to destabilize FtsZ filaments that have formed before they mature into polar Z rings. Prevents FtsZ polymerization. The sequence is that of Probable septum site-determining protein MinC from Laribacter hongkongensis (strain HLHK9).